Consider the following 214-residue polypeptide: tRNA (guanine-N(7)-)-methyltransferase (214 aa).

S-adenosyl-L-methionine-binding residues include E43, E68, D95, and D117. The active site involves D117. Residues K121, D153, and 190–193 (TEYE) each bind substrate.

It belongs to the class I-like SAM-binding methyltransferase superfamily. TrmB family.

It catalyses the reaction guanosine(46) in tRNA + S-adenosyl-L-methionine = N(7)-methylguanosine(46) in tRNA + S-adenosyl-L-homocysteine. It functions in the pathway tRNA modification; N(7)-methylguanine-tRNA biosynthesis. In terms of biological role, catalyzes the formation of N(7)-methylguanine at position 46 (m7G46) in tRNA. In Staphylococcus haemolyticus (strain JCSC1435), this protein is tRNA (guanine-N(7)-)-methyltransferase.